The chain runs to 388 residues: Mannitol-1-phosphate 5-dehydrogenase (388 aa).

Residue Ala5 to Gly16 participates in NAD(+) binding. Lys213 is a catalytic residue.

It belongs to the mannitol dehydrogenase family. As to quaternary structure, monomer.

It carries out the reaction D-mannitol 1-phosphate + NAD(+) = beta-D-fructose 6-phosphate + NADH + H(+). Functionally, catalyzes the NAD(H)-dependent interconversion of D-fructose 6-phosphate and D-mannitol 1-phosphate in the metabolism of mannitol. Has a strong preference for NADH over NADPH. In Aspergillus niger (strain ATCC MYA-4892 / CBS 513.88 / FGSC A1513), this protein is Mannitol-1-phosphate 5-dehydrogenase (mpdA).